Here is a 187-residue protein sequence, read N- to C-terminus: Peptide deformylase (187 aa).

Positions 94 and 136 each coordinate Fe cation. Residue Glu137 is part of the active site. Position 140 (His140) interacts with Fe cation.

Belongs to the polypeptide deformylase family. The cofactor is Fe(2+).

It carries out the reaction N-terminal N-formyl-L-methionyl-[peptide] + H2O = N-terminal L-methionyl-[peptide] + formate. In terms of biological role, removes the formyl group from the N-terminal Met of newly synthesized proteins. Requires at least a dipeptide for an efficient rate of reaction. N-terminal L-methionine is a prerequisite for activity but the enzyme has broad specificity at other positions. The polypeptide is Peptide deformylase (Chlorobaculum tepidum (strain ATCC 49652 / DSM 12025 / NBRC 103806 / TLS) (Chlorobium tepidum)).